The primary structure comprises 334 residues: Probable tRNA pseudouridine synthase B (334 aa).

D82 acts as the Nucleophile in catalysis. The PUA domain maps to 250 to 325; that stretch reads LPKIWIKDSA…IAVDVEKVFM (76 aa).

It belongs to the pseudouridine synthase TruB family. Type 2 subfamily.

The catalysed reaction is uridine(55) in tRNA = pseudouridine(55) in tRNA. Its function is as follows. Could be responsible for synthesis of pseudouridine from uracil-55 in the psi GC loop of transfer RNAs. The chain is Probable tRNA pseudouridine synthase B from Pyrococcus abyssi (strain GE5 / Orsay).